The following is a 543-amino-acid chain: Chaperonin GroEL (543 aa).

ATP is bound by residues 29-32 (TIGP), 86-90 (DGTTT), G413, 478-480 (NAA), and D494.

The protein belongs to the chaperonin (HSP60) family. Forms a cylinder of 14 subunits composed of two heptameric rings stacked back-to-back. Interacts with the co-chaperonin GroES.

The protein localises to the cytoplasm. The enzyme catalyses ATP + H2O + a folded polypeptide = ADP + phosphate + an unfolded polypeptide.. In terms of biological role, together with its co-chaperonin GroES, plays an essential role in assisting protein folding. The GroEL-GroES system forms a nano-cage that allows encapsulation of the non-native substrate proteins and provides a physical environment optimized to promote and accelerate protein folding. This Limosilactobacillus fermentum (strain NBRC 3956 / LMG 18251) (Lactobacillus fermentum) protein is Chaperonin GroEL.